The following is a 338-amino-acid chain: Glycerol-3-phosphate dehydrogenase [NAD(P)+] (338 aa).

NADPH is bound by residues Ser14, Tyr15, His35, and Lys109. Sn-glycerol 3-phosphate is bound by residues Lys109, Gly138, and Thr140. Ala142 is a binding site for NADPH. Residues Lys194, Asp247, Ser257, Arg258, and Asn259 each contribute to the sn-glycerol 3-phosphate site. Lys194 acts as the Proton acceptor in catalysis. Residue Arg258 participates in NADPH binding. NADPH contacts are provided by Val282 and Glu284.

Belongs to the NAD-dependent glycerol-3-phosphate dehydrogenase family.

It localises to the cytoplasm. The enzyme catalyses sn-glycerol 3-phosphate + NAD(+) = dihydroxyacetone phosphate + NADH + H(+). It carries out the reaction sn-glycerol 3-phosphate + NADP(+) = dihydroxyacetone phosphate + NADPH + H(+). It participates in membrane lipid metabolism; glycerophospholipid metabolism. In terms of biological role, catalyzes the reduction of the glycolytic intermediate dihydroxyacetone phosphate (DHAP) to sn-glycerol 3-phosphate (G3P), the key precursor for phospholipid synthesis. The protein is Glycerol-3-phosphate dehydrogenase [NAD(P)+] of Shewanella baltica (strain OS195).